Reading from the N-terminus, the 159-residue chain is Deoxyuridine 5'-triphosphate nucleotidohydrolase (159 aa).

Residues Ser-79, Gly-92, Asp-95, Tyr-98, Lys-103, Arg-148, Phe-153, and Gly-154 each contribute to the dUMP site.

The protein belongs to the dUTPase family. Homotrimer. Mg(2+) serves as cofactor.

The catalysed reaction is dUTP + H2O = dUMP + diphosphate + H(+). The protein operates within pyrimidine metabolism; dUMP biosynthesis; dUMP from dCTP (dUTP route): step 2/2. Involved in nucleotide metabolism via production of dUMP, the immediate precursor of thymidine nucleotides, and decreases the intracellular concentration of dUTP so that uracil cannot be incorporated into DNA. The polypeptide is Deoxyuridine 5'-triphosphate nucleotidohydrolase (DUT1) (Candida albicans (strain SC5314 / ATCC MYA-2876) (Yeast)).